We begin with the raw amino-acid sequence, 143 residues long: Large ribosomal subunit protein uL11 (143 aa).

This sequence belongs to the universal ribosomal protein uL11 family. As to quaternary structure, part of the ribosomal stalk of the 50S ribosomal subunit. Interacts with L10 and the large rRNA to form the base of the stalk. L10 forms an elongated spine to which L12 dimers bind in a sequential fashion forming a multimeric L10(L12)X complex. In terms of processing, one or more lysine residues are methylated.

Functionally, forms part of the ribosomal stalk which helps the ribosome interact with GTP-bound translation factors. The protein is Large ribosomal subunit protein uL11 of Halorhodospira halophila (strain DSM 244 / SL1) (Ectothiorhodospira halophila (strain DSM 244 / SL1)).